The sequence spans 655 residues: Endoplasmic reticulum chaperone BiP (655 aa).

An N-terminal signal peptide occupies residues 1–19 (MMKFTVVAAALLLLGAVRA). The interval 1–81 (MMKFTVVAAA…EGERLIGDAA (81 aa)) is required for interaction with ELAPOR1. Residue 37–40 (GTTY) coordinates ATP. Ser87 carries the post-translational modification Phosphoserine. Lys97 is a binding site for ATP. An N6-acetyllysine modification is found at Lys126. The nucleotide-binding (NBD) stretch occupies residues 126 to 281 (KPYIQVDIGG…KKKTGKDVRK (156 aa)). Tyr161 is modified (3'-nitrotyrosine). Lys214 is subject to N6-acetyllysine. 228–230 (GGT) is an ATP binding site. At Lys272 the chain carries N6-acetyllysine. Position 294 to 301 (294 to 301 (EKAKRALS)) interacts with ATP. Lys327 is modified (N6-acetyllysine). Lys353 is covalently cross-linked (Glycyl lysine isopeptide (Lys-Gly) (interchain with G-Cter in SUMO2)). N6-acetyllysine; alternate is present on Lys354. Lys354 is covalently cross-linked (Glycyl lysine isopeptide (Lys-Gly) (interchain with G-Cter in SUMO1); alternate). ATP is bound at residue 365–368 (GSTR). Residues 410–420 (QDTGDLVLLDV) are interdomain linker. Positions 421–501 (CPLTLGIETV…PRGVPQIEVT (81 aa)) are substrate-binding (SBD). Lys448 is modified (N6-succinyllysine). Arg493 is modified (omega-N-methylarginine). Thr519 is subject to O-AMP-threonine; alternate. Thr519 is modified (phosphothreonine; alternate). Residue Lys586 is modified to N6,N6,N6-trimethyllysine; by METTL21A; in vitro. At Lys586 the chain carries N6,N6-dimethyllysine; alternate. Lys586 carries the N6-methyllysine; alternate modification. An N6-methyllysine modification is found at Lys592. Residues 632–655 (ISKLYGSGGPPPTGEEDTSEKDEL) are disordered. Thr644 and Thr649 each carry phosphothreonine. Acidic residues predominate over residues 645 to 655 (GEEDTSEKDEL). Position 650 is a phosphoserine (Ser650). The Prevents secretion from ER motif lies at 652 to 655 (KDEL).

It belongs to the heat shock protein 70 family. As to quaternary structure, monomer and homooligomer; homooligomerization via the interdomain linker inactivates the chaperone activity and acts as a storage of HSPA5/BiP molecules. Interacts with DNAJC1 (via J domain). Component of an EIF2 complex at least composed of CELF1/CUGBP1, CALR, CALR3, EIF2S1, EIF2S2, HSP90B1 and HSPA5. Part of a large chaperone multiprotein complex comprising DNAJB11, HSP90B1, HSPA5, HYOU, PDIA2, PDIA4, PDIA6, PPIB, SDF2L1, UGGT1 and very small amounts of ERP29, but not, or at very low levels, CALR nor CANX. Interacts with TMEM132A and TRIM21. May form a complex with ERLEC1, OS9, SEL1L and SYVN1. Interacts with DNAJC10. Interacts with DNAJB9/ERdj4; leading to recruit HSPA5/BiP to ERN1/IRE1. Interacts with ERN1/IRE1 (via luminal domain); the interaction takes place following interaction with DNAJB9/ERdj4 and leads to inactivate ERN1/IRE1, the interaction also competitively inhibits ERN1 interaction with MANF. Interacts directly with MANF (via SAP domain); the interaction inhibits ATP binding to HSPA5/BiP and subsequent nucleotide exchange. Interacts with ERN1 (via luminal domain); the interaction competitively inhibits ERN1 interaction with MANF. Interacts with EIF2AK3/PERK (via luminal domain); interaction leads to inactivate EIF2AK3/PERK. Interacts with MX1. Interacts with METTL23. Interacts with CEMIP; the interaction induces calcium leakage from the endoplasmic reticulum and cell migration. Interacts with PCSK4 form; the interaction takes place in the endoplasmic reticulum. Interacts with CIPC. Interacts with CCDC88B (via C-terminus); the interaction opposes ERN1-mediated JNK activation, protecting against apoptosis. Interacts with INPP5K; necessary for INPP5K localization at the endoplasmic reticulum. Interacts with MANF; the interaction is direct. Interacts with LOXL2; leading to activate the ERN1/IRE1-XBP1 pathway of the unfolded protein response. Interacts with CLU under stressed condition; interaction increases CLU protein stability; facilitates its retrotranslocation and redistribution to the mitochondria; cooperatively suppress stress-induced apoptosis by stabilizing mitochondrial membrane integrity. Interacts with CCDC47. Interacts with CLN3. Interacts with ELAPOR1; may regulate the function of HSPA5 in apoptosis and cell proliferation. Interacts with CASP7. Interacts with ILDR2; the interaction stabilizes ILDR2 expression. Interacts with ADAM7. In terms of processing, in unstressed cells, AMPylation at Thr-519 by FICD inactivates the chaperome activity: AMPylated form is locked in a relatively inert state and only weakly stimulated by J domain-containing proteins. In response to endoplasmic reticulum stress, de-AMPylation by the same protein, FICD, restores the chaperone activity. In terms of tissue distribution, expressed in sperm (at protein level).

It localises to the endoplasmic reticulum lumen. The protein resides in the melanosome. The protein localises to the cytoplasm. It is found in the cell surface. It catalyses the reaction ATP + H2O = ADP + phosphate + H(+). Its activity is regulated as follows. The chaperone activity is regulated by ATP-induced allosteric coupling of the nucleotide-binding (NBD) and substrate-binding (SBD) domains. In the ADP-bound and nucleotide-free (apo) states, the two domains have little interaction. In contrast, in the ATP-bound state the two domains are tightly coupled, which results in drastically accelerated kinetics in both binding and release of polypeptide substrates. J domain-containing co-chaperones (DNAJB9/ERdj4 or DNAJC10/ERdj5) stimulate the ATPase activity and are required for efficient substrate recognition by HSPA5/BiP. Homooligomerization inactivates participating HSPA5/BiP protomers and probably act as reservoirs to store HSPA5/BiP molecules when they are not needed by the cell. Its function is as follows. Endoplasmic reticulum chaperone that plays a key role in protein folding and quality control in the endoplasmic reticulum lumen. Involved in the correct folding of proteins and degradation of misfolded proteins via its interaction with DNAJC10/ERdj5, probably to facilitate the release of DNAJC10/ERdj5 from its substrate. Acts as a key repressor of the EIF2AK3/PERK and ERN1/IRE1-mediated unfolded protein response (UPR). In the unstressed endoplasmic reticulum, recruited by DNAJB9/ERdj4 to the luminal region of ERN1/IRE1, leading to disrupt the dimerization of ERN1/IRE1, thereby inactivating ERN1/IRE1. Also binds and inactivates EIF2AK3/PERK in unstressed cells. Accumulation of misfolded protein in the endoplasmic reticulum causes release of HSPA5/BiP from ERN1/IRE1 and EIF2AK3/PERK, allowing their homodimerization and subsequent activation. Plays an auxiliary role in post-translational transport of small presecretory proteins across endoplasmic reticulum (ER). May function as an allosteric modulator for SEC61 channel-forming translocon complex, likely cooperating with SEC62 to enable the productive insertion of these precursors into SEC61 channel. Appears to specifically regulate translocation of precursors having inhibitory residues in their mature region that weaken channel gating. May also play a role in apoptosis and cell proliferation. This is Endoplasmic reticulum chaperone BiP from Mus musculus (Mouse).